Here is an 84-residue protein sequence, read N- to C-terminus: ATP synthase subunit c (84 aa).

Helical transmembrane passes span 10–30 and 53–73; these read IAVA…FAIL and FIVA…ALFF.

The protein belongs to the ATPase C chain family. In terms of assembly, F-type ATPases have 2 components, F(1) - the catalytic core - and F(0) - the membrane proton channel. F(1) has five subunits: alpha(3), beta(3), gamma(1), delta(1), epsilon(1). F(0) has three main subunits: a(1), b(2) and c(10-14). The alpha and beta chains form an alternating ring which encloses part of the gamma chain. F(1) is attached to F(0) by a central stalk formed by the gamma and epsilon chains, while a peripheral stalk is formed by the delta and b chains.

It localises to the cell inner membrane. In terms of biological role, f(1)F(0) ATP synthase produces ATP from ADP in the presence of a proton or sodium gradient. F-type ATPases consist of two structural domains, F(1) containing the extramembraneous catalytic core and F(0) containing the membrane proton channel, linked together by a central stalk and a peripheral stalk. During catalysis, ATP synthesis in the catalytic domain of F(1) is coupled via a rotary mechanism of the central stalk subunits to proton translocation. Key component of the F(0) channel; it plays a direct role in translocation across the membrane. A homomeric c-ring of between 10-14 subunits forms the central stalk rotor element with the F(1) delta and epsilon subunits. This chain is ATP synthase subunit c, found in Shewanella putrefaciens (strain CN-32 / ATCC BAA-453).